The primary structure comprises 65 residues: Crotamine CRO1 (65 aa).

The N-terminal stretch at 1–22 (MKILYLLFAFLFLAFLSEPGNA) is a signal peptide. 3 disulfide bridges follow: Cys-26–Cys-58, Cys-33–Cys-52, and Cys-40–Cys-59.

It belongs to the crotamine-myotoxin family. Monomer. Expressed by the venom gland.

Its subcellular location is the secreted. Its function is as follows. Cationic peptide that possesses multiple functions. It acts as a cell-penetrating peptide (CPP), and as a potent voltage-gated potassium channel (Kv) inhibitor. It exhibits antimicrobial activities, hind limb paralysis, and severe muscle necrosis by a non-enzymatic mechanism. The protein is Crotamine CRO1 (CRO1) of Crotalus durissus terrificus (South American rattlesnake).